Consider the following 353-residue polypeptide: Guanine nucleotide-binding protein subunit alpha (353 aa).

G2 carries N-myristoyl glycine lipidation. Residue C3 is the site of S-palmitoyl cysteine attachment. The G-alpha domain occupies 33–353; that stretch reads NEIKMLLLGA…QLHLRECGLL (321 aa). The interval 36-49 is G1 motif; sequence KMLLLGAGESGKST. The GTP site is built by E44, S45, G46, K47, S48, T49, D150, L175, T181, G203, N269, K270, D272, and A325. S48 is a Mg(2+) binding site. Residues 173–181 are G2 motif; the sequence is DILRSRVKT. T181 contributes to the Mg(2+) binding site. The G3 motif stretch occupies residues 196 to 205; the sequence is YKLFDVGGQR. Positions 265-272 are G4 motif; it reads ILFLNKID. Positions 323–328 are G5 motif; it reads TCATDT.

The protein belongs to the G-alpha family. G(q) subfamily. G proteins are composed of 3 units; alpha, beta and gamma. The alpha chain contains the guanine nucleotide binding site. The cofactor is Mg(2+).

In terms of biological role, guanine nucleotide-binding proteins (G proteins) are involved as modulators or transducers in various transmembrane signaling systems. This Coprinellus congregatus (Inky cap fungus) protein is Guanine nucleotide-binding protein subunit alpha (CGP1).